A 1170-amino-acid polypeptide reads, in one-letter code: Glucose transport transcription regulator RGT1 (1170 aa).

The span at Met1 to Asn22 shows a compositional bias: polar residues. A disordered region spans residues Met1 to Ala46. A DNA-binding region (zn(2)-C6 fungal-type) is located at residues Cys47–Cys76. The interval Ser77 to Val149 is disordered. Over residues Arg99 to Asn108 the composition is skewed to basic and acidic residues. Over residues Asn113 to Thr138 the composition is skewed to low complexity. The segment covering Val139–Val149 has biased composition (polar residues). Phosphoserine occurs at positions 202, 205, 208, and 229. Disordered stretches follow at residues Val226–Gly254, Ala269–Leu288, Ser293–Gly323, Ala384–Thr506, and Asn944–Pro977. The segment covering Ser239–Gly250 has biased composition (low complexity). A compositionally biased stretch (basic and acidic residues) spans Thr271–Arg280. Residues Ser283 and Ser284 each carry the phosphoserine modification. Low complexity-rich tracts occupy residues Ser293–Pro302, Gln309–Gly323, and Gln385–Gln397. A phosphoserine mark is found at Ser410 and Ser414. Residues Ala411–Leu422 are compositionally biased toward polar residues. The span at Gly424 to Ser444 shows a compositional bias: low complexity. Residues Lys445 to Thr457 show a composition bias toward polar residues. Basic residues predominate over residues Ser473–Pro488. The segment covering Ser493 to Thr506 has biased composition (polar residues). Ser1130 is subject to Phosphoserine.

Belongs to the EDS1/RGT1 family. Glucose-induced phosphorylation regulates the DNA-binding activity. Hyperphosphorylation in cells growing on high levels of glucose does prevents DNA-binding and dephosphorylation restores DNA-binding ability.

Its subcellular location is the nucleus. The protein localises to the cytoplasm. Its function is as follows. Glucose-responsive transcription factor that regulates expression of several glucose transporter (HXT) genes in response to glucose. In the absence of glucose, it functions as a transcriptional repressor, whereas high concentrations of glucose cause it to function as a transcriptional activator. In cells growing on low levels of glucose, has a neutral role, neither repressing nor activating transcription. Binds the consensus binding site sequence 5'-CGGANNA-3', of which multiple copies are present in all HXT promoters regulated by RGT1. This chain is Glucose transport transcription regulator RGT1 (RGT1), found in Saccharomyces cerevisiae (strain RM11-1a) (Baker's yeast).